The sequence spans 81 residues: ATP synthase subunit c (81 aa).

2 helical membrane-spanning segments follow: residues Ile5 to Gly25 and Val57 to Ala77.

This sequence belongs to the ATPase C chain family. As to quaternary structure, F-type ATPases have 2 components, F(1) - the catalytic core - and F(0) - the membrane proton channel. F(1) has five subunits: alpha(3), beta(3), gamma(1), delta(1), epsilon(1). F(0) has three main subunits: a(1), b(2) and c(10-14). The alpha and beta chains form an alternating ring which encloses part of the gamma chain. F(1) is attached to F(0) by a central stalk formed by the gamma and epsilon chains, while a peripheral stalk is formed by the delta and b chains.

The protein resides in the cell membrane. Its function is as follows. F(1)F(0) ATP synthase produces ATP from ADP in the presence of a proton or sodium gradient. F-type ATPases consist of two structural domains, F(1) containing the extramembraneous catalytic core and F(0) containing the membrane proton channel, linked together by a central stalk and a peripheral stalk. During catalysis, ATP synthesis in the catalytic domain of F(1) is coupled via a rotary mechanism of the central stalk subunits to proton translocation. Functionally, key component of the F(0) channel; it plays a direct role in translocation across the membrane. A homomeric c-ring of between 10-14 subunits forms the central stalk rotor element with the F(1) delta and epsilon subunits. The polypeptide is ATP synthase subunit c (Mycobacterium sp. (strain JLS)).